The sequence spans 425 residues: 3-deoxy-D-manno-octulosonic acid transferase (425 aa).

The chain crosses the membrane as a helical; Signal-anchor span at residues 3–23; that stretch reads ELLYTALLYLIQPLIWIRLWV. Catalysis depends on Glu-60, which acts as the Proton acceptor. CMP-binding positions include 268–269, 309–311, and 335–338; these read PR, MGE, and NPLE.

Belongs to the glycosyltransferase group 1 family. Glycosyltransferase 30 subfamily.

The protein resides in the cell inner membrane. The catalysed reaction is lipid IVA (E. coli) + CMP-3-deoxy-beta-D-manno-octulosonate = alpha-Kdo-(2-&gt;6)-lipid IVA (E. coli) + CMP + H(+). It carries out the reaction alpha-Kdo-(2-&gt;6)-lipid IVA (E. coli) + CMP-3-deoxy-beta-D-manno-octulosonate = alpha-Kdo-(2-&gt;4)-alpha-Kdo-(2-&gt;6)-lipid IVA (E. coli) + CMP + H(+). It functions in the pathway glycolipid biosynthesis; KDO(2)-lipid A biosynthesis; KDO(2)-lipid A from CMP-3-deoxy-D-manno-octulosonate and lipid IV(A): step 1/4. It participates in glycolipid biosynthesis; KDO(2)-lipid A biosynthesis; KDO(2)-lipid A from CMP-3-deoxy-D-manno-octulosonate and lipid IV(A): step 2/4. Its pathway is bacterial outer membrane biogenesis; LPS core biosynthesis. Functionally, involved in lipopolysaccharide (LPS) biosynthesis. Catalyzes the transfer of two 3-deoxy-D-manno-octulosonate (Kdo) residues from CMP-Kdo to lipid IV(A), the tetraacyldisaccharide-1,4'-bisphosphate precursor of lipid A. The sequence is that of 3-deoxy-D-manno-octulosonic acid transferase (waaA) from Escherichia coli O157:H7.